The following is a 270-amino-acid chain: MTVDDPKGMKDQLDQKPNGKTAKGFVSSWRWYPAAVTLGVLCLGLLVTVILLILQLSQVSDLIKKQQANITHQEDILEGQILAQRRSEKSAQESQKELKEMIETLAHKLDEKSKKLMELHRQNLNLQEVLKEAANYSGPCPQDWLWHEENCYQFSSGSFNWEKSQENCLSLDAHLLKINSTDELEFIQQMIAHSSFPFWMGLSMRKPNYSWLWEDGTPLTPHLFRIQGAVSRMYPSGTCAYIQRGTVFAENCILTAFSICQKKANLLRAQ.

Residues 1–14 (MTVDDPKGMKDQLD) show a composition bias toward basic and acidic residues. Positions 1–22 (MTVDDPKGMKDQLDQKPNGKTA) are disordered. Topologically, residues 1–33 (MTVDDPKGMKDQLDQKPNGKTAKGFVSSWRWYP) are cytoplasmic. Residues 34–56 (AAVTLGVLCLGLLVTVILLILQL) traverse the membrane as a helical; Signal-anchor for type II membrane protein segment. Cysteine 42 is lipidated: S-palmitoyl cysteine. The segment at 57-146 (SQVSDLIKKQ…SGPCPQDWLW (90 aa)) is neck. Residues 57-270 (SQVSDLIKKQ…QKKANLLRAQ (214 aa)) lie on the Extracellular side of the membrane. N-linked (GlcNAc...) asparagine glycosylation is found at asparagine 69 and asparagine 135. A coiled-coil region spans residues 85 to 135 (RRSEKSAQESQKELKEMIETLAHKLDEKSKKLMELHRQNLNLQEVLKEAAN). 3 cysteine pairs are disulfide-bonded: cysteine 140–cysteine 151, cysteine 168–cysteine 260, and cysteine 239–cysteine 252. The 115-residue stretch at 147 to 261 (HEENCYQFSS…CILTAFSICQ (115 aa)) folds into the C-type lectin domain.

Homodimer; disulfide-linked. May form a hexamer composed of 3 homodimers. Interacts with HSP70. N-glycosylated. As to expression, highly expressed in endothelial cells, aortic intima and lung. Expressed at low level in other tissues.

The protein localises to the cell membrane. The protein resides in the membrane raft. It localises to the secreted. Functionally, receptor that mediates the recognition, internalization and degradation of oxidatively modified low density lipoprotein (oxLDL) by vascular endothelial cells. OxLDL is a marker of atherosclerosis that induces vascular endothelial cell activation and dysfunction, resulting in pro-inflammatory responses, pro-oxidative conditions and apoptosis. Its association with oxLDL induces the activation of NF-kappa-B through an increased production of intracellular reactive oxygen and a variety of pro-atherogenic cellular responses including a reduction of nitric oxide (NO) release, monocyte adhesion and apoptosis. In addition to binding oxLDL, it acts as a receptor for the HSP70 protein involved in antigen cross-presentation to naive T-cells in dendritic cells, thereby participating in cell-mediated antigen cross-presentation. Also involved in inflammatory process, by acting as a leukocyte-adhesion molecule at the vascular interface in endotoxin-induced inflammation. Also acts as a receptor for advanced glycation end (AGE) products, activated platelets, monocytes, apoptotic cells and both Gram-negative and Gram-positive bacteria. This chain is Oxidized low-density lipoprotein receptor 1 (OLR1), found in Bos taurus (Bovine).